Consider the following 494-residue polypeptide: Prenylcysteine oxidase 1-like (494 aa).

A signal peptide spans 1-22; the sequence is MARAAPLLAALTALLAAAAAGG. A glycan (N-linked (GlcNAc...) asparagine) is linked at N342.

This sequence belongs to the prenylcysteine oxidase family. FAD is required as a cofactor.

Its subcellular location is the secreted. In terms of biological role, likely to have oxidoreductase activity. Required in the mevalonate pathway to regulate prenylation and enhances the bactericidal activity of neutrophils. The sequence is that of Prenylcysteine oxidase 1-like (PCYOX1L) from Homo sapiens (Human).